The sequence spans 306 residues: tRNA pseudouridine synthase B (306 aa).

Residue Asp-48 is the Nucleophile of the active site.

This sequence belongs to the pseudouridine synthase TruB family. Type 1 subfamily.

The enzyme catalyses uridine(55) in tRNA = pseudouridine(55) in tRNA. Its function is as follows. Responsible for synthesis of pseudouridine from uracil-55 in the psi GC loop of transfer RNAs. The polypeptide is tRNA pseudouridine synthase B (Chromobacterium violaceum (strain ATCC 12472 / DSM 30191 / JCM 1249 / CCUG 213 / NBRC 12614 / NCIMB 9131 / NCTC 9757 / MK)).